A 475-amino-acid polypeptide reads, in one-letter code: Glycogen synthase (475 aa).

ADP-alpha-D-glucose is bound at residue Lys-15.

This sequence belongs to the glycosyltransferase 1 family. Bacterial/plant glycogen synthase subfamily.

The enzyme catalyses [(1-&gt;4)-alpha-D-glucosyl](n) + ADP-alpha-D-glucose = [(1-&gt;4)-alpha-D-glucosyl](n+1) + ADP + H(+). It functions in the pathway glycan biosynthesis; glycogen biosynthesis. In terms of biological role, synthesizes alpha-1,4-glucan chains using ADP-glucose. The protein is Glycogen synthase of Kosmotoga olearia (strain ATCC BAA-1733 / DSM 21960 / TBF 19.5.1).